The sequence spans 254 residues: Protein CbbY, plasmid (254 aa).

The protein belongs to the HAD-like hydrolase superfamily. CbbY/CbbZ/Gph/YieH family.

This chain is Protein CbbY, plasmid (cbbYP), found in Cupriavidus necator (strain ATCC 17699 / DSM 428 / KCTC 22496 / NCIMB 10442 / H16 / Stanier 337) (Ralstonia eutropha).